Reading from the N-terminus, the 209-residue chain is Glycolipid transfer protein A (209 aa).

2 tandem repeats follow at residues 45–55 (IKADITGNITK) and 56–66 (IRSVYESNPTK). Positions 45–66 (IKADITGNITKIRSVYESNPTK) are 2 X 12 AA approximate tandem repeats. 48–55 (DITGNITK) contributes to the beta-D-galactosyl-(1-&gt;4)-beta-D-glucosyl-(1&lt;-&gt;1)-N-[(9Z)-octadecenoyl]-sphing-4-enine binding site. 2 residues coordinate beta-D-galactosyl-(1-&gt;4)-beta-D-glucosyl-(1&lt;-&gt;1)-N-[(9Z)-octadecenoyl]-sphing-4-enine: histidine 140 and tyrosine 207.

This sequence belongs to the GLTP family.

It is found in the cytoplasm. In terms of biological role, accelerates the intermembrane transfer of various glycolipids. Catalyzes the transfer of various glycosphingolipids between membranes but does not catalyze the transfer of phospholipids. May be involved in the intracellular translocation of glucosylceramides. In Xenopus laevis (African clawed frog), this protein is Glycolipid transfer protein A (gltp-a).